Consider the following 866-residue polypeptide: Putative linoleate 9S-lipoxygenase 3 (866 aa).

The PLAT domain occupies 33–161; that stretch reads NDFGATVIDG…KYRYDRVFFA (129 aa). The Lipoxygenase domain maps to 164-866; sequence AYLPSQMPAA…AKGIPNSISI (703 aa). A disordered region spans residues 206–250; the sequence is YNDLGSPDSGNPRPILGGSPDTPYPRRGRTGRKPTTTDPDSESRL. Fe cation-binding residues include histidine 521, histidine 526, histidine 712, asparagine 716, and isoleucine 866.

This sequence belongs to the lipoxygenase family. Fe cation is required as a cofactor.

The catalysed reaction is (9Z,12Z)-octadecadienoate + O2 = (9S)-hydroperoxy-(10E,12Z)-octadecadienoate. It functions in the pathway lipid metabolism; oxylipin biosynthesis. Plant lipoxygenase may be involved in a number of diverse aspects of plant physiology including growth and development, pest resistance, and senescence or responses to wounding. Catalyzes the hydroperoxidation of lipids containing a cis,cis-1,4-pentadiene structure. This is Putative linoleate 9S-lipoxygenase 3 from Oryza sativa subsp. japonica (Rice).